A 729-amino-acid chain; its full sequence is Translation initiation factor IF-2 (729 aa).

The tract at residues 20 to 141 (QFAGGGRGPG…TTTVRAPVRP (122 aa)) is disordered. The span at 22–91 (AGGGRGPGNP…PGGGRGGGRG (70 aa)) shows a compositional bias: gly residues. The segment covering 92-108 (GDGRRRDESFVENEGGR) has biased composition (basic and acidic residues). A compositionally biased stretch (low complexity) spans 112-127 (SGRTTSTATTARTPGG). One can recognise a tr-type G domain in the interval 229–396 (PRPPVVTIMG…IILLVADLNE (168 aa)). The segment at 238 to 245 (GHVDHGKT) is G1. Position 238–245 (238–245 (GHVDHGKT)) interacts with GTP. The tract at residues 263–267 (GITQH) is G2. A G3 region spans residues 284-287 (DTPG). GTP contacts are provided by residues 284–288 (DTPGH) and 338–341 (NKID). Residues 338–341 (NKID) are G4. Residues 374–376 (SAK) are G5.

The protein belongs to the TRAFAC class translation factor GTPase superfamily. Classic translation factor GTPase family. IF-2 subfamily.

The protein resides in the cytoplasm. Its function is as follows. One of the essential components for the initiation of protein synthesis. Protects formylmethionyl-tRNA from spontaneous hydrolysis and promotes its binding to the 30S ribosomal subunits. Also involved in the hydrolysis of GTP during the formation of the 70S ribosomal complex. The protein is Translation initiation factor IF-2 of Roseiflexus sp. (strain RS-1).